The primary structure comprises 219 residues: Histone H1.11R (219 aa).

2 stretches are compositionally biased toward low complexity: residues 1–20 (MAET…AAKA) and 28–40 (AAGG…PAGP). Disordered stretches follow at residues 1–42 (MAET…GPSV) and 89–219 (LVSK…AKKK). Residues 38–111 (AGPSVTELIT…GASGSFRLSK (74 aa)) enclose the H15 domain. 4 stretches are compositionally biased toward basic residues: residues 121 to 135 (PKKK…KAAA), 143 to 160 (KKPK…KAKK), 168 to 183 (KSVK…KKAV), and 192 to 219 (KAVK…AKKK).

It belongs to the histone H1/H5 family.

It is found in the nucleus. Its subcellular location is the chromosome. Its function is as follows. Histones H1 are necessary for the condensation of nucleosome chains into higher-order structures. In Gallus gallus (Chicken), this protein is Histone H1.11R.